Consider the following 325-residue polypeptide: Acetyl-coenzyme A carboxylase carboxyl transferase subunit alpha (325 aa).

A CoA carboxyltransferase C-terminal domain is found at glutamate 35–glutamine 292.

Belongs to the AccA family. As to quaternary structure, acetyl-CoA carboxylase is a heterohexamer composed of biotin carboxyl carrier protein (AccB), biotin carboxylase (AccC) and two subunits each of ACCase subunit alpha (AccA) and ACCase subunit beta (AccD).

Its subcellular location is the cytoplasm. It catalyses the reaction N(6)-carboxybiotinyl-L-lysyl-[protein] + acetyl-CoA = N(6)-biotinyl-L-lysyl-[protein] + malonyl-CoA. Its pathway is lipid metabolism; malonyl-CoA biosynthesis; malonyl-CoA from acetyl-CoA: step 1/1. Its function is as follows. Component of the acetyl coenzyme A carboxylase (ACC) complex. First, biotin carboxylase catalyzes the carboxylation of biotin on its carrier protein (BCCP) and then the CO(2) group is transferred by the carboxyltransferase to acetyl-CoA to form malonyl-CoA. This is Acetyl-coenzyme A carboxylase carboxyl transferase subunit alpha from Geobacillus sp. (strain WCH70).